The sequence spans 571 residues: Gag-Pro polyprotein (571 aa).

G2 is lipidated: N-myristoyl glycine; by host. The PPXY motif signature appears at 100–103 (PPPY). 2 repeats span residues 342–362 (PPPG…DCPT) and 367–387 (PPPG…DCPT). 2 CCHC-type zinc fingers span residues 345-362 (GPCY…DCPT) and 370-387 (GPCP…DCPT). One can recognise a Peptidase A2 domain in the interval 447–525 (ALMLVDTGAE…DKWQILGRDV (79 aa)). The Protease; shared with dimeric partner role is filled by D452.

As to quaternary structure, homodimer; the homodimers are part of the immature particles. Interacts with human TSG101 and NEDD4; these interactions are essential for budding and release of viral particles. Homodimer; further assembles as homohexamers. In terms of processing, specific enzymatic cleavages by the viral protease yield mature proteins. The polyprotein is cleaved during and after budding, this process is termed maturation. The protease is autoproteolytically processed at its N- and C-termini. Post-translationally, gag polyprotein: Myristoylated. Myristoylation of the matrix (MA) domain mediates the transport and binding of Gag polyproteins to the host plasma membrane and is required for the assembly of viral particles.

It is found in the virion. The matrix domain targets Gag, Gag-Pro and Gag-Pro-Pol polyproteins to the plasma membrane via a multipartite membrane binding signal, that includes its myristoylated N-terminus. In terms of biological role, matrix protein. Functionally, forms the spherical core of the virus that encapsulates the genomic RNA-nucleocapsid complex. Its function is as follows. Binds strongly to viral nucleic acids and promote their aggregation. Also destabilizes the nucleic acids duplexes via highly structured zinc-binding motifs. The aspartyl protease mediates proteolytic cleavages of Gag and Gag-Pol polyproteins during or shortly after the release of the virion from the plasma membrane. Cleavages take place as an ordered, step-wise cascade to yield mature proteins. This process is called maturation. Displays maximal activity during the budding process just prior to particle release from the cell. The polypeptide is Gag-Pro polyprotein (Bos taurus (Bovine)).